The following is a 269-amino-acid chain: Indole-3-glycerol phosphate synthase (269 aa).

Belongs to the TrpC family.

It carries out the reaction 1-(2-carboxyphenylamino)-1-deoxy-D-ribulose 5-phosphate + H(+) = (1S,2R)-1-C-(indol-3-yl)glycerol 3-phosphate + CO2 + H2O. It participates in amino-acid biosynthesis; L-tryptophan biosynthesis; L-tryptophan from chorismate: step 4/5. This is Indole-3-glycerol phosphate synthase from Rhodococcus opacus (strain B4).